A 380-amino-acid polypeptide reads, in one-letter code: Cytochrome b (380 aa).

The next 4 membrane-spanning stretches (helical) occupy residues 34–54 (FGSL…LLAM), 78–99 (WLIR…YLHI), 114–134 (WNTG…GYVL), and 179–199 (FFAL…IHLT). Heme b is bound by residues histidine 84 and histidine 98. Heme b contacts are provided by histidine 183 and histidine 197. Histidine 202 is an a ubiquinone binding site. A run of 4 helical transmembrane segments spans residues 227 to 247 (LKDI…ALFS), 289 to 309 (LGGV…PLLH), 321 to 341 (LSQL…WVGS), and 348 to 368 (FIII…ILLP).

Belongs to the cytochrome b family. As to quaternary structure, the cytochrome bc1 complex contains 11 subunits: 3 respiratory subunits (MT-CYB, CYC1 and UQCRFS1), 2 core proteins (UQCRC1 and UQCRC2) and 6 low-molecular weight proteins (UQCRH/QCR6, UQCRB/QCR7, UQCRQ/QCR8, UQCR10/QCR9, UQCR11/QCR10 and a cleavage product of UQCRFS1). This cytochrome bc1 complex then forms a dimer. The cofactor is heme b.

It localises to the mitochondrion inner membrane. Component of the ubiquinol-cytochrome c reductase complex (complex III or cytochrome b-c1 complex) that is part of the mitochondrial respiratory chain. The b-c1 complex mediates electron transfer from ubiquinol to cytochrome c. Contributes to the generation of a proton gradient across the mitochondrial membrane that is then used for ATP synthesis. This is Cytochrome b (MT-CYB) from Pelagodroma marina (White-faced storm-petrel).